An 801-amino-acid polypeptide reads, in one-letter code: Sucrose synthase isoform 2 (801 aa).

The GT-B glycosyltransferase stretch occupies residues Met271–Thr748.

This sequence belongs to the glycosyltransferase 1 family. Plant sucrose synthase subfamily. Homotetramer. Exclusively expressed in flowers.

The catalysed reaction is an NDP-alpha-D-glucose + D-fructose = a ribonucleoside 5'-diphosphate + sucrose + H(+). In terms of biological role, sucrose-cleaving enzyme that provides UDP-glucose and fructose for various metabolic pathways. This is Sucrose synthase isoform 2 from Daucus carota (Wild carrot).